Reading from the N-terminus, the 1345-residue chain is CRISPR-associated endonuclease Cas9 (1345 aa).

Residue D10 is the For RuvC-like nuclease domain of the active site. Mg(2+) contacts are provided by D10, E762, and E766. An HNH Cas9-type domain is found at 770–921 (TNQGRRNSQQ…DKAGFIKRQL (152 aa)). H840 serves as the catalytic Proton acceptor for HNH nuclease domain. Residue H983 coordinates Mg(2+).

The protein belongs to the CRISPR-associated protein Cas9 family. Subtype II-A subfamily. In terms of assembly, monomer. Binds crRNA and tracrRNA. Mg(2+) serves as cofactor.

In terms of biological role, CRISPR (clustered regularly interspaced short palindromic repeat) is an adaptive immune system that provides protection against mobile genetic elements (viruses, transposable elements and conjugative plasmids). CRISPR clusters contain spacers, sequences complementary to antecedent mobile elements, and target invading nucleic acids. CRISPR clusters are transcribed and processed into CRISPR RNA (crRNA). In type II CRISPR systems correct processing of pre-crRNA requires a trans-encoded small RNA (tracrRNA), endogenous ribonuclease 3 (rnc) and this protein. The tracrRNA serves as a guide for ribonuclease 3-aided processing of pre-crRNA. Subsequently Cas9/crRNA/tracrRNA endonucleolytically cleaves linear or circular dsDNA target complementary to the spacer; Cas9 is inactive in the absence of the 2 guide RNAs (gRNA). Cas9 recognizes the protospacer adjacent motif (PAM) in the CRISPR repeat sequences to help distinguish self versus nonself, as targets within the bacterial CRISPR locus do not have PAMs. PAM recognition is also required for catalytic activity. Complements the gRNA coprocessing defect in a cas9 deletion in S.pyogenes strain 370 and cuts target plasmid in Cas9:gRNAs mixing experiments with S.thermophilus CRISPR3 from strain LMD-9. The polypeptide is CRISPR-associated endonuclease Cas9 (Streptococcus mutans serotype c (strain ATCC 700610 / UA159)).